Reading from the N-terminus, the 280-residue chain is Shikimate dehydrogenase (NADP(+)) (280 aa).

Shikimate-binding positions include 18–20 (SRS) and Thr-65. The active-site Proton acceptor is the Lys-69. Asn-90 and Asp-105 together coordinate shikimate. Residues 131-135 (GAGGA), 154-159 (NRTRAR), and Ile-219 contribute to the NADP(+) site. Tyr-221 lines the shikimate pocket. Gly-242 is an NADP(+) binding site.

Belongs to the shikimate dehydrogenase family. Homodimer.

It carries out the reaction shikimate + NADP(+) = 3-dehydroshikimate + NADPH + H(+). It functions in the pathway metabolic intermediate biosynthesis; chorismate biosynthesis; chorismate from D-erythrose 4-phosphate and phosphoenolpyruvate: step 4/7. Its function is as follows. Involved in the biosynthesis of the chorismate, which leads to the biosynthesis of aromatic amino acids. Catalyzes the reversible NADPH linked reduction of 3-dehydroshikimate (DHSA) to yield shikimate (SA). The sequence is that of Shikimate dehydrogenase (NADP(+)) from Methylocella silvestris (strain DSM 15510 / CIP 108128 / LMG 27833 / NCIMB 13906 / BL2).